The chain runs to 90 residues: Co-chaperonin GroES (90 aa).

The protein belongs to the GroES chaperonin family. As to quaternary structure, heptamer of 7 subunits arranged in a ring. Interacts with the chaperonin GroEL.

It is found in the cytoplasm. Together with the chaperonin GroEL, plays an essential role in assisting protein folding. The GroEL-GroES system forms a nano-cage that allows encapsulation of the non-native substrate proteins and provides a physical environment optimized to promote and accelerate protein folding. GroES binds to the apical surface of the GroEL ring, thereby capping the opening of the GroEL channel. The sequence is that of Co-chaperonin GroES from Fusobacterium nucleatum subsp. nucleatum (strain ATCC 25586 / DSM 15643 / BCRC 10681 / CIP 101130 / JCM 8532 / KCTC 2640 / LMG 13131 / VPI 4355).